A 124-amino-acid polypeptide reads, in one-letter code: Small ribosomal subunit protein uS12 (124 aa).

At D89 the chain carries 3-methylthioaspartic acid.

The protein belongs to the universal ribosomal protein uS12 family. As to quaternary structure, part of the 30S ribosomal subunit. Contacts proteins S8 and S17. May interact with IF1 in the 30S initiation complex.

Its function is as follows. With S4 and S5 plays an important role in translational accuracy. Interacts with and stabilizes bases of the 16S rRNA that are involved in tRNA selection in the A site and with the mRNA backbone. Located at the interface of the 30S and 50S subunits, it traverses the body of the 30S subunit contacting proteins on the other side and probably holding the rRNA structure together. The combined cluster of proteins S8, S12 and S17 appears to hold together the shoulder and platform of the 30S subunit. The sequence is that of Small ribosomal subunit protein uS12 from Photobacterium profundum (strain SS9).